Reading from the N-terminus, the 315-residue chain is Archaeosortase A (315 aa).

7 consecutive transmembrane segments (helical) span residues 12 to 32 (VIPY…AGVA), 47 to 67 (AGAW…FAFV), 74 to 94 (TVLI…VFAG), 173 to 193 (VVFE…IAAV), 204 to 224 (IALS…FIAL), 227 to 247 (GYQW…FGLT), and 260 to 280 (VLAQ…IARW). Cys177 functions as the Acyl-thioester intermediate in the catalytic mechanism. The active-site Proton donor is Arg218.

The protein belongs to the exosortase/archaeosortase family. Archaeosortase A subfamily.

The protein localises to the cell membrane. In terms of biological role, transpeptidase that recognizes and modifies its substrate by proteolytic cleavage of a sorting signal. Following cleavage, a covalent intermediate is formed via a thioester bond between the archaeosortase and its substrate, which is then transferred and covalently attached to the cell membrane. The sequence is that of Archaeosortase A from Natronomonas pharaonis (strain ATCC 35678 / DSM 2160 / CIP 103997 / JCM 8858 / NBRC 14720 / NCIMB 2260 / Gabara) (Halobacterium pharaonis).